The sequence spans 149 residues: Oligosaccharyltransferase complex subunit ostc-A (149 aa).

Topologically, residues 1–32 (MESLYRVPFTVLECPNLKLKKPSWLHMPSAMT) are cytoplasmic. Residues 33-53 (VYAMVVVSYFLITGGIIYDVI) form a helical membrane-spanning segment. Residues 54 to 83 (VEPPSVGSMTDEHGHQRPVAFLAYRVNGQY) lie on the Extracellular side of the membrane. Residues 84–104 (IMEGLASSFLFTMGGLGFIIL) form a helical membrane-spanning segment. Topologically, residues 105-117 (DRSNTPNIPKLNR) are cytoplasmic. A helical transmembrane segment spans residues 118–138 (FLLLFIGFVCVLLSFFMARVF). Topologically, residues 139-149 (MRMKLPGYLMG) are extracellular.

This sequence belongs to the OSTC family. In terms of assembly, specific component of the STT3A-containing form of the oligosaccharyltransferase (OST) complex.

Its subcellular location is the membrane. The protein operates within protein modification; protein glycosylation. In terms of biological role, specific component of the STT3A-containing form of the oligosaccharyl transferase (OST) complex that catalyzes the initial transfer of a defined glycan (Glc(3)Man(9)GlcNAc(2) in eukaryotes) from the lipid carrier dolichol-pyrophosphate to an asparagine residue within an Asn-X-Ser/Thr consensus motif in nascent polypeptide chains, the first step in protein N-glycosylation. N-glycosylation occurs cotranslationally and the complex associates with the Sec61 complex at the channel-forming translocon complex that mediates protein translocation across the endoplasmic reticulum (ER). All subunits are required for a maximal enzyme activity. The polypeptide is Oligosaccharyltransferase complex subunit ostc-A (Xenopus laevis (African clawed frog)).